The chain runs to 232 residues: 7-cyano-7-deazaguanine synthase (232 aa).

11–21 is a binding site for ATP; sequence ASGGMDSATAA. Residues Cys192, Cys200, Cys203, and Cys206 each coordinate Zn(2+).

Belongs to the QueC family. Requires Zn(2+) as cofactor.

It carries out the reaction 7-carboxy-7-deazaguanine + NH4(+) + ATP = 7-cyano-7-deazaguanine + ADP + phosphate + H2O + H(+). Its pathway is purine metabolism; 7-cyano-7-deazaguanine biosynthesis. In terms of biological role, catalyzes the ATP-dependent conversion of 7-carboxy-7-deazaguanine (CDG) to 7-cyano-7-deazaguanine (preQ(0)). In Haloarcula marismortui (strain ATCC 43049 / DSM 3752 / JCM 8966 / VKM B-1809) (Halobacterium marismortui), this protein is 7-cyano-7-deazaguanine synthase.